Reading from the N-terminus, the 292-residue chain is Cyclin-dependent kinase 5 homolog (292 aa).

Positions Tyr-4–Phe-285 constitute a Protein kinase domain. ATP contacts are provided by residues Leu-10 to Val-18 and Lys-33. Thr-14 carries the post-translational modification Phosphothreonine. At Tyr-15 the chain carries Phosphotyrosine. The Proton acceptor role is filled by Asp-126.

This sequence belongs to the protein kinase superfamily. CMGC Ser/Thr protein kinase family. CDC2/CDKX subfamily.

The catalysed reaction is L-seryl-[protein] + ATP = O-phospho-L-seryl-[protein] + ADP + H(+). It carries out the reaction L-threonyl-[protein] + ATP = O-phospho-L-threonyl-[protein] + ADP + H(+). Its activity is regulated as follows. Phosphorylation at Thr-14 or Tyr-15 inactivates the enzyme. This Dictyostelium discoideum (Social amoeba) protein is Cyclin-dependent kinase 5 homolog (cdk5).